Here is a 468-residue protein sequence, read N- to C-terminus: MMAATAAAQVRAGTRWAPALCRMPWLPLMLVAAAAATSEQQVPLVLWSSDRGLWAPAADTHEGHITSDMQLSTYLDPALELGPRNVLLFLQDKLSIEDFTAYGGVFGNKQDSAFSNLENALDLAPSSLVLPAVDWYAISTLTTYLQEKLGASPLHVDLATLQELKLNASIPALLLIRLPYTASSGLMAPKEVLMGNDEVIGQVLSTLKSEDIPYTAALTAVRPSRVARDVAMVTGGLGRQLLQRTVVPPTMNVPVSYNDSYDTRILFWAQNFSVAYGEHWEDLTSRTFGVQDLNLTGSFWNDTVARLVLTYDSLFGTMVTFKFILANSYYSVSARHWFTLENLEIHSNGSVAYFNASQVTGPSIYSFHCEHVSSENEDGNLLVPDTQPSLWQMTFRDFQIQAFNVTDKKFSYASDCAGFFSPGIWMGLLTSLFMLFIFTYGLHMILSLKTMDRFDDHKGPTITLTQIV.

An N-terminal signal peptide occupies residues 1–35 (MMAATAAAQVRAGTRWAPALCRMPWLPLMLVAAAA). Residues 36-228 (ATSEQQVPLV…TAVRPSRVAR (193 aa)) constitute a propeptide that is removed on maturation. Residues 36–417 (ATSEQQVPLV…KKFSYASDCA (382 aa)) lie on the Lumenal side of the membrane. Asn167, Asn258, Asn271, Asn294, Asn301, Asn348, Asn355, and Asn404 each carry an N-linked (GlcNAc...) asparagine glycan. Cysteines 369 and 416 form a disulfide. The helical transmembrane segment at 418–438 (GFFSPGIWMGLLTSLFMLFIF) threads the bilayer. The Cytoplasmic portion of the chain corresponds to 439–468 (TYGLHMILSLKTMDRFDDHKGPTITLTQIV).

It belongs to the vacuolar ATPase subunit S1 family. Accessory component of the multisubunit proton-transporting vacuolar (V)-ATPase protein pump. Interacts (via N-terminus) with ATP6AP2 (via N-terminus). Interacts with RNASEK. Interacts with TMEM106B (via C-terminus). In terms of processing, N-glycosylated.

The protein resides in the endoplasmic reticulum membrane. It is found in the endoplasmic reticulum-Golgi intermediate compartment membrane. It localises to the cytoplasmic vesicle. The protein localises to the secretory vesicle. Its subcellular location is the synaptic vesicle membrane. The protein resides in the clathrin-coated vesicle membrane. Accessory subunit of the proton-transporting vacuolar (V)-ATPase protein pump, which is required for luminal acidification of secretory vesicles. Guides the V-type ATPase into specialized subcellular compartments, such as neuroendocrine regulated secretory vesicles or the ruffled border of the osteoclast, thereby regulating its activity. Involved in membrane trafficking and Ca(2+)-dependent membrane fusion. May play a role in the assembly of the V-type ATPase complex. In aerobic conditions, involved in intracellular iron homeostasis, thus triggering the activity of Fe(2+) prolyl hydroxylase (PHD) enzymes, and leading to HIF1A hydroxylation and subsequent proteasomal degradation. In islets of Langerhans cells, may regulate the acidification of dense-core secretory granules. The chain is V-type proton ATPase subunit S1 (ATP6AP1) from Bos taurus (Bovine).